The following is a 229-amino-acid chain: MGQKVHPNGIRLGITKPWISTWYADKSDYANNLSSDWEVRKFLEKKLKQASVSKIVIERPAKSVRVTIHTARPGVVIGKKGEDVEKLRNEVAKLTGIPAQINIAEIRKPELDAKLVAEGIASQLERRVMFRRAMKRAVQNAMRLGAKGIKVEVSGRLGGAEIARSEWYREGRVPLHTLRADIDYSTAESHTQYGVIGVKVWVFKGEVLDGVVPALEEPKQQPKRKPRGK.

A KH type-2 domain is found at 39-107 (VRKFLEKKLK…PAQINIAEIR (69 aa)).

It belongs to the universal ribosomal protein uS3 family. In terms of assembly, part of the 30S ribosomal subunit. Forms a tight complex with proteins S10 and S14.

Binds the lower part of the 30S subunit head. Binds mRNA in the 70S ribosome, positioning it for translation. The sequence is that of Small ribosomal subunit protein uS3 from Shewanella loihica (strain ATCC BAA-1088 / PV-4).